Reading from the N-terminus, the 46-residue chain is Endochitinase 3 (46 aa).

The interval 1 to 21 is disordered; sequence MTPQGNKPSSHDVITGRWTPS.

The protein belongs to the glycosyl hydrolase 19 family. Chitinase class I subfamily.

It carries out the reaction Random endo-hydrolysis of N-acetyl-beta-D-glucosaminide (1-&gt;4)-beta-linkages in chitin and chitodextrins.. Functionally, defense against chitin-containing fungal and bacterial pathogens. The chain is Endochitinase 3 from Arachis hypogaea (Peanut).